Here is a 638-residue protein sequence, read N- to C-terminus: Chaperone protein DnaK (638 aa).

Thr-200 bears the Phosphothreonine; by autocatalysis mark. Positions 598 to 621 (SLHMAATAEQQSGSTGAGAGASAK) are disordered.

It belongs to the heat shock protein 70 family.

Its function is as follows. Acts as a chaperone. The polypeptide is Chaperone protein DnaK (Xylella fastidiosa (strain M23)).